Reading from the N-terminus, the 312-residue chain is Ribosomal RNA small subunit methyltransferase H (312 aa).

Residues 33 to 35 (GGY), D51, F78, D97, and Q104 contribute to the S-adenosyl-L-methionine site.

The protein belongs to the methyltransferase superfamily. RsmH family.

It is found in the cytoplasm. The enzyme catalyses cytidine(1402) in 16S rRNA + S-adenosyl-L-methionine = N(4)-methylcytidine(1402) in 16S rRNA + S-adenosyl-L-homocysteine + H(+). Specifically methylates the N4 position of cytidine in position 1402 (C1402) of 16S rRNA. This Orientia tsutsugamushi (strain Ikeda) (Rickettsia tsutsugamushi) protein is Ribosomal RNA small subunit methyltransferase H.